A 512-amino-acid chain; its full sequence is Replication initiation protein (512 aa).

Its function is as follows. Essential for replication. Binds specifically to a 60-bp region corresponding to the putative origin of replication of pXO2. Also binds nonspecifically to single-stranded DNA with lower affinity. This is Replication initiation protein (repS) from Bacillus anthracis.